Here is a 332-residue protein sequence, read N- to C-terminus: MNTILEKLYQSEVLTQVESQQLFTAIITGQLAPTQLAAALIAMKVRGETPQEIAGAATALLADAKPFPRPDYPFADIVGTGGDGSNSINISTSSAFVAAACGVKVAKHGNRSVSSQSGSSDLLAAFGISLDLPAEQARQALDELNVCFLFAPQYHSGFRHAMPVRKELKTRTIFNVLGPLINPARPPLAVIGVYSPQLVLPIAETLKMLGYQRAAVVHGGGMDEVALHSATQVAELRDGEITRYQLTPDDFGLSSHPQEALAGGSPEENRDILTRLLQGKGQLAHEEAVAANVALLLKMFGHEDLRDNAQRALATIRSGKAWQHVAALAERG.

Residues Gly-79, 82–83 (GD), Ser-87, 89–92 (NIST), 107–115 (KHGNRSVSS), and Ser-119 contribute to the 5-phospho-alpha-D-ribose 1-diphosphate site. Anthranilate is bound at residue Gly-79. Ser-91 is a binding site for Mg(2+). Asn-110 lines the anthranilate pocket. Arg-165 contacts anthranilate. Mg(2+)-binding residues include Asp-223 and Glu-224.

Belongs to the anthranilate phosphoribosyltransferase family. Homodimer. Mg(2+) serves as cofactor.

The enzyme catalyses N-(5-phospho-beta-D-ribosyl)anthranilate + diphosphate = 5-phospho-alpha-D-ribose 1-diphosphate + anthranilate. It functions in the pathway amino-acid biosynthesis; L-tryptophan biosynthesis; L-tryptophan from chorismate: step 2/5. Its function is as follows. Catalyzes the transfer of the phosphoribosyl group of 5-phosphorylribose-1-pyrophosphate (PRPP) to anthranilate to yield N-(5'-phosphoribosyl)-anthranilate (PRA). The polypeptide is Anthranilate phosphoribosyltransferase (Erwinia tasmaniensis (strain DSM 17950 / CFBP 7177 / CIP 109463 / NCPPB 4357 / Et1/99)).